Here is a 1515-residue protein sequence, read N- to C-terminus: DNA topoisomerase 2-binding protein 1 (1515 aa).

BRCT domains lie at 101 to 189 (VYNM…KYTD) and 195 to 284 (FKCP…IYKA). Position 298 is a phosphothreonine (Thr298). BRCT domains are found at residues 353–443 (APED…SYIH), 551–636 (REEG…SNPL), and 644–741 (SGVT…HFLV). Positions 759–893 (VSSNPDLPAH…TDSHSASPQL (135 aa)) are interaction with CIP2A. Residue Thr782 is modified to Phosphothreonine. A disordered region spans residues 799–826 (SQQRGQDPTFPPVRQPLTKEPSLHLDTP). Thr851 is subject to Phosphothreonine. 5 positions are modified to phosphoserine: Ser862, Ser863, Ser866, Ser888, and Ser890. Positions 880-891 (SSRNTDSHSASP) are enriched in polar residues. Residues 880–901 (SSRNTDSHSASPQLKGAHLEEE) form a disordered region. The region spanning 902-993 (ETRKPLDSVV…KHLPESLYPH (92 aa)) is the BRCT 6 domain. Positions 1020–1055 (VSASKDDGPDHLSVEGNETNTMGTNDKESPLLNGSG) are disordered. Residues 1023–1032 (SKDDGPDHLS) show a composition bias toward basic and acidic residues. Thr1064 is modified (phosphothreonine). Residues 1097–1116 (SRSSCNSASSTPDSARSVRS) are compositionally biased toward low complexity. Disordered regions lie at residues 1097–1119 (SRSS…SGRS), 1203–1255 (VTQA…TQEE), and 1491–1515 (KKGG…PRVH). Positions 1217–1229 (PPVAERPLIPEPQ) are enriched in pro residues. In terms of domain architecture, BRCT 7 spans 1255-1347 (ETHRKVKKQY…RFVQEEDYEW (93 aa)). The Nuclear localization signal signature appears at 1510 to 1513 (KRPR).

It belongs to the TOPBP1 family. Interacts (via BRCT domains 1 and 2) with (phosphorylated) MDC1; promoting TOPBP1 recruitment to DNA damage sites during mitosis. Interacts (via BRCT domains 7 and 8) with (autophosphorylated) ATR; promoting activation of ATR. Interacts (via BRCT domains 7 and 8) with (phosphorylated) POLQ; specifically binds POLQ phosphorylated by PLK1, promoting POLQ recruitment to DNA damage sites. Interacts (via BRCT domains 1 and 2) with (phosphorylated) RAD9A. Interacts (via BRCT domain 2) with (phosphorylated) TP53BP1. Interacts (via BRCT domain 2) with (phosphorylated) HTATSF1. Interacts (via BRCT domains 7 and 8) with (phosphorylated) RAD51; promoting RAD51 recruitment to damaged chromatin. Interacts with CIP2A; forming the CIP2A-TOPBP1 complex. Interacts with POLE. Interacts with UBR5. Interacts with E2F1. Interacts with PML. Interacts with SMARCA2. Interacts with SMARCA4. Interacts with RHNO1. May interact with TOP2B. Interacts with TICRR. Interacts with HELB. In terms of processing, phosphorylated on serine and threonine residues in response to X-ray irradiation. Ubiquitinated and degraded by the proteasome. X-ray irradiation reduces ubiquitination. Deubiquitinated by USP13; leading to TOPBP1 stabilizion and activation of the ATR-TOPBP1 axis pathway. Highly expressed in testis.

It localises to the nucleus. The protein localises to the chromosome. It is found in the cytoplasm. Its subcellular location is the cytoskeleton. The protein resides in the microtubule organizing center. It localises to the centrosome. The protein localises to the spindle pole. Scaffold protein that acts as a key protein-protein adapter in DNA replication and DNA repair. Composed of multiple BRCT domains, which specifically recognize and bind phosphorylated proteins, bringing proteins together into functional combinations. Required for DNA replication initiation but not for the formation of pre-replicative complexes or the elongation stages. Necessary for the loading of replication factors onto chromatin, including GMNC, CDC45, DNA polymerases and components of the GINS complex. Plays a central role in DNA repair by bridging proteins and promoting recruitment of proteins to DNA damage sites. Involved in double-strand break (DSB) repair via homologous recombination in S-phase by promoting the exchange between the DNA replication factor A (RPA) complex and RAD51. Mechanistically, TOPBP1 is recruited to DNA damage sites in S-phase via interaction with phosphorylated HTATSF1, and promotes the loading of RAD51, thereby facilitating RAD51 nucleofilaments formation and RPA displacement, followed by homologous recombination. Involved in microhomology-mediated end-joining (MMEJ) DNA repair by promoting recruitment of polymerase theta (POLQ) to DNA damage sites during mitosis. MMEJ is an alternative non-homologous end-joining (NHEJ) machinery that takes place during mitosis to repair DSBs in DNA that originate in S-phase. Recognizes and binds POLQ phosphorylated by PLK1, enabling its recruitment to DSBs for subsequent repair. Involved in G1 DNA damage checkpoint by acting as a molecular adapter that couples TP53BP1 and the 9-1-1 complex. In response to DNA damage, triggers the recruitment of checkpoint signaling proteins on chromatin, which activate the CHEK1 signaling pathway and block S-phase progression. Acts as an activator of the kinase activity of ATR. Also required for chromosomal stability when DSBs occur during mitosis by forming filamentous assemblies that bridge MDC1 and tether broken chromosomes during mitosis. Together with CIP2A, plays an essential role in the response to genome instability generated by the presence of acentric chromosome fragments derived from shattered chromosomes within micronuclei. Micronuclei, which are frequently found in cancer cells, consist of chromatin surrounded by their own nuclear membrane: following breakdown of the micronuclear envelope, a process associated with chromothripsis, the CIP2A-TOPBP1 complex tethers chromosome fragments during mitosis to ensure clustered segregation of the fragments to a single daughter cell nucleus, facilitating re-ligation with limited chromosome scattering and loss. Recruits the SWI/SNF chromatin remodeling complex to E2F1-responsive promoters, thereby down-regulating E2F1 activity and inhibiting E2F1-dependent apoptosis during G1/S transition and after DNA damage. This is DNA topoisomerase 2-binding protein 1 from Mus musculus (Mouse).